A 339-amino-acid polypeptide reads, in one-letter code: Ketol-acid reductoisomerase (NADP(+)) (339 aa).

Residues methionine 1–threonine 182 form the KARI N-terminal Rossmann domain. NADP(+)-binding positions include tyrosine 24–glutamine 27, arginine 48, serine 51, serine 53, and aspartate 83–glutamine 86. The active site involves histidine 108. Glycine 134 serves as a coordination point for NADP(+). The KARI C-terminal knotted domain maps to threonine 183–isoleucine 328. Mg(2+) is bound by residues aspartate 191, glutamate 195, glutamate 227, and glutamate 231. Residue serine 252 participates in substrate binding.

This sequence belongs to the ketol-acid reductoisomerase family. It depends on Mg(2+) as a cofactor.

The catalysed reaction is (2R)-2,3-dihydroxy-3-methylbutanoate + NADP(+) = (2S)-2-acetolactate + NADPH + H(+). It carries out the reaction (2R,3R)-2,3-dihydroxy-3-methylpentanoate + NADP(+) = (S)-2-ethyl-2-hydroxy-3-oxobutanoate + NADPH + H(+). It participates in amino-acid biosynthesis; L-isoleucine biosynthesis; L-isoleucine from 2-oxobutanoate: step 2/4. It functions in the pathway amino-acid biosynthesis; L-valine biosynthesis; L-valine from pyruvate: step 2/4. Involved in the biosynthesis of branched-chain amino acids (BCAA). Catalyzes an alkyl-migration followed by a ketol-acid reduction of (S)-2-acetolactate (S2AL) to yield (R)-2,3-dihydroxy-isovalerate. In the isomerase reaction, S2AL is rearranged via a Mg-dependent methyl migration to produce 3-hydroxy-3-methyl-2-ketobutyrate (HMKB). In the reductase reaction, this 2-ketoacid undergoes a metal-dependent reduction by NADPH to yield (R)-2,3-dihydroxy-isovalerate. This is Ketol-acid reductoisomerase (NADP(+)) from Chelativorans sp. (strain BNC1).